The primary structure comprises 222 residues: MPVSEASVSAGRRARLGGLYVIVGGADPVAQARAAIGGGARAIQVRMKDAPAGAVLEATRRILALATGRALVLVNDRADLALLAGADGVHLGDDDLPVPEARRLLGPDLLVGRTTRTLEEARAALAEGADHVGYGPIFASRSKALPVPPRGLAALAEVARALPAPVVAIGGIGLDDVAAVARAGAACAAVIEAVLGAADPEAAAARMQAAFEAGRAARGATP.

Residues 44 to 48 (QVRMK) and Asn-75 each bind 4-amino-2-methyl-5-(diphosphooxymethyl)pyrimidine. 2 residues coordinate Mg(2+): Asp-76 and Asp-95. Thr-114 contributes to the 4-amino-2-methyl-5-(diphosphooxymethyl)pyrimidine binding site. 140–142 (SRS) contacts 2-[(2R,5Z)-2-carboxy-4-methylthiazol-5(2H)-ylidene]ethyl phosphate. Lys-143 provides a ligand contact to 4-amino-2-methyl-5-(diphosphooxymethyl)pyrimidine. Residue Gly-171 participates in 2-[(2R,5Z)-2-carboxy-4-methylthiazol-5(2H)-ylidene]ethyl phosphate binding.

It belongs to the thiamine-phosphate synthase family. The cofactor is Mg(2+).

The enzyme catalyses 2-[(2R,5Z)-2-carboxy-4-methylthiazol-5(2H)-ylidene]ethyl phosphate + 4-amino-2-methyl-5-(diphosphooxymethyl)pyrimidine + 2 H(+) = thiamine phosphate + CO2 + diphosphate. It carries out the reaction 2-(2-carboxy-4-methylthiazol-5-yl)ethyl phosphate + 4-amino-2-methyl-5-(diphosphooxymethyl)pyrimidine + 2 H(+) = thiamine phosphate + CO2 + diphosphate. It catalyses the reaction 4-methyl-5-(2-phosphooxyethyl)-thiazole + 4-amino-2-methyl-5-(diphosphooxymethyl)pyrimidine + H(+) = thiamine phosphate + diphosphate. Its pathway is cofactor biosynthesis; thiamine diphosphate biosynthesis; thiamine phosphate from 4-amino-2-methyl-5-diphosphomethylpyrimidine and 4-methyl-5-(2-phosphoethyl)-thiazole: step 1/1. Condenses 4-methyl-5-(beta-hydroxyethyl)thiazole monophosphate (THZ-P) and 2-methyl-4-amino-5-hydroxymethyl pyrimidine pyrophosphate (HMP-PP) to form thiamine monophosphate (TMP). In Anaeromyxobacter dehalogenans (strain 2CP-C), this protein is Thiamine-phosphate synthase.